A 412-amino-acid chain; its full sequence is N-carbamoyl-L-amino-acid amidohydrolase (412 aa).

H82, D93, E128, and H193 together coordinate a divalent metal cation. The an N-carbamoyl-L-alpha-amino acid site is built by Q196, H229, N278, R291, and G360. The tract at residues 212–330 (SIVGVRALRV…DVDEFFNLSP (119 aa)) is involved in dimerization. H385 serves as a coordination point for a divalent metal cation.

The protein belongs to the peptidase M20 family. Homodimer. Requires Mn(2+) as cofactor. The cofactor is Ni(2+). Co(2+) is required as a cofactor. It depends on Fe(2+) as a cofactor.

The catalysed reaction is an N-carbamoyl-L-alpha-amino acid + H2O + 2 H(+) = an L-alpha-amino acid + NH4(+) + CO2. The enzyme catalyses N-carbamoyl-L-tryptophan + H2O + 2 H(+) = L-tryptophan + NH4(+) + CO2. It catalyses the reaction N-carbamoyl-L-tyrosine + H2O + 2 H(+) = L-tyrosine + NH4(+) + CO2. It carries out the reaction N-carbamoyl-L-phenylalanine + H2O + 2 H(+) = L-phenylalanine + NH4(+) + CO2. Its function is as follows. Catalyzes the hydrolysis of aliphatic N-carbamoyl-L-alpha-amino acids to free L-alpha-amino acids. Is strictly L-specific since it is inactive toward N-carbamoyl-D-alpha-amino acids. Shows a preference for aromatic N-carbamoyl-L-alpha-amino acids, such as N-carbamoyl-L-tryptophan and N-carbamoyl-L-tyrosine and, to a lesser extent, N-carbamoyl-L-phenylalanine and the non-natural amino acid N-carbamoyl-L-thienylalanine. Carbamoyl derivatives of beta-alanine and charged aliphatic amino acids are not accepted as substrates. The polypeptide is N-carbamoyl-L-amino-acid amidohydrolase (Paenarthrobacter aurescens (Arthrobacter aurescens)).